A 470-amino-acid chain; its full sequence is Ribulose bisphosphate carboxylase large chain (470 aa).

Substrate-binding residues include asparagine 115 and threonine 165. The Proton acceptor role is filled by lysine 167. Lysine 169 provides a ligand contact to substrate. The Mg(2+) site is built by lysine 193, aspartate 195, and glutamate 196. The residue at position 193 (lysine 193) is an N6-carboxylysine. Histidine 286 serves as the catalytic Proton acceptor. 3 residues coordinate substrate: arginine 287, histidine 319, and serine 371.

The protein belongs to the RuBisCO large chain family. Type I subfamily. In terms of assembly, heterohexadecamer of 8 large chains and 8 small chains. The cofactor is Mg(2+).

The protein localises to the carboxysome. The enzyme catalyses 2 (2R)-3-phosphoglycerate + 2 H(+) = D-ribulose 1,5-bisphosphate + CO2 + H2O. The catalysed reaction is D-ribulose 1,5-bisphosphate + O2 = 2-phosphoglycolate + (2R)-3-phosphoglycerate + 2 H(+). RuBisCO catalyzes two reactions: the carboxylation of D-ribulose 1,5-bisphosphate, the primary event in carbon dioxide fixation, as well as the oxidative fragmentation of the pentose substrate in the photorespiration process. Both reactions occur simultaneously and in competition at the same active site. The chain is Ribulose bisphosphate carboxylase large chain from Prochlorococcus marinus (strain MIT 9303).